Reading from the N-terminus, the 258-residue chain is Ubiquinone/menaquinone biosynthesis C-methyltransferase UbiE (258 aa).

S-adenosyl-L-methionine contacts are provided by residues Thr-81, Asp-102, and 130 to 131 (NA).

Belongs to the class I-like SAM-binding methyltransferase superfamily. MenG/UbiE family.

It carries out the reaction a 2-demethylmenaquinol + S-adenosyl-L-methionine = a menaquinol + S-adenosyl-L-homocysteine + H(+). The enzyme catalyses a 2-methoxy-6-(all-trans-polyprenyl)benzene-1,4-diol + S-adenosyl-L-methionine = a 5-methoxy-2-methyl-3-(all-trans-polyprenyl)benzene-1,4-diol + S-adenosyl-L-homocysteine + H(+). Its pathway is quinol/quinone metabolism; menaquinone biosynthesis; menaquinol from 1,4-dihydroxy-2-naphthoate: step 2/2. It participates in cofactor biosynthesis; ubiquinone biosynthesis. Methyltransferase required for the conversion of demethylmenaquinol (DMKH2) to menaquinol (MKH2) and the conversion of 2-polyprenyl-6-methoxy-1,4-benzoquinol (DDMQH2) to 2-polyprenyl-3-methyl-6-methoxy-1,4-benzoquinol (DMQH2). The sequence is that of Ubiquinone/menaquinone biosynthesis C-methyltransferase UbiE from Sinorhizobium fredii (strain NBRC 101917 / NGR234).